The primary structure comprises 190 residues: dITP/XTP pyrophosphatase (190 aa).

7–12 provides a ligand contact to substrate; sequence SNNKNK. D68 functions as the Proton acceptor in the catalytic mechanism. D68 is a binding site for Mg(2+). Residues T69, 148–151, K171, and 176–177 contribute to the substrate site; these read FGYD and HR.

It belongs to the HAM1 NTPase family. As to quaternary structure, homodimer. Mg(2+) serves as cofactor.

It catalyses the reaction XTP + H2O = XMP + diphosphate + H(+). It carries out the reaction dITP + H2O = dIMP + diphosphate + H(+). The enzyme catalyses ITP + H2O = IMP + diphosphate + H(+). Pyrophosphatase that catalyzes the hydrolysis of nucleoside triphosphates to their monophosphate derivatives, with a high preference for the non-canonical purine nucleotides XTP (xanthosine triphosphate), dITP (deoxyinosine triphosphate) and ITP. Seems to function as a house-cleaning enzyme that removes non-canonical purine nucleotides from the nucleotide pool, thus preventing their incorporation into DNA/RNA and avoiding chromosomal lesions. The sequence is that of dITP/XTP pyrophosphatase from Flavobacterium psychrophilum (strain ATCC 49511 / DSM 21280 / CIP 103535 / JIP02/86).